A 728-amino-acid chain; its full sequence is Polyribonucleotide nucleotidyltransferase (728 aa).

Residues Asp503 and Asp509 each coordinate Mg(2+). The 60-residue stretch at 570–629 folds into the KH domain; the sequence is PRLTTIKIPSDCIGMVIGKGGETIRGITEETGAEINIADDGTVTIACTTKEGTDAALATI. The 75-residue stretch at 639 to 713 folds into the S1 motif domain; sequence GNIYVGKVRD…GKTKFALSIK (75 aa).

It belongs to the polyribonucleotide nucleotidyltransferase family. Mg(2+) is required as a cofactor.

The protein resides in the cytoplasm. The enzyme catalyses RNA(n+1) + phosphate = RNA(n) + a ribonucleoside 5'-diphosphate. In terms of biological role, involved in mRNA degradation. Catalyzes the phosphorolysis of single-stranded polyribonucleotides processively in the 3'- to 5'-direction. The protein is Polyribonucleotide nucleotidyltransferase of Chlorobium chlorochromatii (strain CaD3).